A 551-amino-acid chain; its full sequence is NAD(P)H-quinone oxidoreductase chain 4 (551 aa).

14 helical membrane passes run 25 to 45 (FPWL…VPFI), 56 to 76 (WFAL…YLNG), 111 to 131 (LILL…PVTF), 133 to 153 (PKLF…VFAV), 157 to 177 (LLFF…LAIW), 189 to 209 (FILY…AMGF), 233 to 253 (LLCY…VPLH), 264 to 284 (TAPV…YALM), 298 to 318 (FAPL…LTSF), 335 to 355 (MGFV…GAML), 356 to 376 (QMIS…ATYD), 397 to 417 (FALW…SGFV), 438 to 458 (IVID…LLSM), and 485 to 505 (VYII…PRLM).

Belongs to the complex I subunit 4 family.

Its subcellular location is the cellular thylakoid membrane. It catalyses the reaction a plastoquinone + NADH + (n+1) H(+)(in) = a plastoquinol + NAD(+) + n H(+)(out). The enzyme catalyses a plastoquinone + NADPH + (n+1) H(+)(in) = a plastoquinol + NADP(+) + n H(+)(out). Functionally, NDH-1 shuttles electrons from NAD(P)H, via FMN and iron-sulfur (Fe-S) centers, to quinones in the respiratory chain. The immediate electron acceptor for the enzyme in this species is believed to be plastoquinone. Couples the redox reaction to proton translocation (for every two electrons transferred, four hydrogen ions are translocated across the cytoplasmic membrane), and thus conserves the redox energy in a proton gradient. This is NAD(P)H-quinone oxidoreductase chain 4 from Synechococcus sp. (strain WH7803).